A 332-amino-acid chain; its full sequence is Methionine import ATP-binding protein MetN (332 aa).

One can recognise an ABC transporter domain in the interval 2 to 239 (ITFQDVSKTY…PASDTARRFV (238 aa)). 36 to 43 (GASGAGKS) provides a ligand contact to ATP.

The protein belongs to the ABC transporter superfamily. Methionine importer (TC 3.A.1.24) family. The complex is composed of two ATP-binding proteins (MetN), two transmembrane proteins (MetI) and a solute-binding protein (MetQ).

It localises to the cell inner membrane. It carries out the reaction L-methionine(out) + ATP + H2O = L-methionine(in) + ADP + phosphate + H(+). It catalyses the reaction D-methionine(out) + ATP + H2O = D-methionine(in) + ADP + phosphate + H(+). Its function is as follows. Part of the ABC transporter complex MetNIQ involved in methionine import. Responsible for energy coupling to the transport system. The polypeptide is Methionine import ATP-binding protein MetN (Caulobacter vibrioides (strain ATCC 19089 / CIP 103742 / CB 15) (Caulobacter crescentus)).